A 1042-amino-acid chain; its full sequence is Diacylglycerol lipase-alpha (1042 aa).

Topologically, residues methionine 1–alanine 22 are cytoplasmic. A helical transmembrane segment spans residues isoleucine 23–leucine 43. Residues valine 44–arginine 60 are Extracellular-facing. A helical transmembrane segment spans residues glycine 61 to methionine 81. Over arginine 82–arginine 101 the chain is Cytoplasmic. The chain crosses the membrane as a helical span at residues leucine 102–tyrosine 122. At tyrosine 123–leucine 136 the chain is on the extracellular side. Asparagine 133 carries N-linked (GlcNAc...) asparagine glycosylation. A helical membrane pass occupies residues glycine 137–phenylalanine 157. Topologically, residues aspartate 158–arginine 1042 are cytoplasmic. Residues serine 472 and aspartate 524 each act as charge relay system in the active site. Serine 727, serine 729, serine 732, serine 743, serine 782, serine 784, serine 806, serine 808, serine 833, serine 847, and serine 952 each carry phosphoserine. The segment at leucine 846 to glycine 903 is disordered. Positions leucine 1014–arginine 1042 are disordered. Phosphothreonine is present on threonine 1023.

It belongs to the AB hydrolase superfamily. Lipase family. As to quaternary structure, interacts (via C-terminal) with CAMK2A; leading to the phosphorylation and inhibition of DAGLA enzymatic activity. Interacts (via PPXXF motif) with HOMER1 and HOMER2; this interaction is required for DAGLA membrane localization. Ca(2+) is required as a cofactor. Phosphorylated at Ser-782 and Ser-808 by CAMK2A; phosphorylation by CAMK2A inhibits diacylglycerol lipase activity. Highly expressed in brain and pancreas.

It localises to the cell membrane. It is found in the postsynaptic density membrane. The protein localises to the early endosome membrane. The protein resides in the cell projection. Its subcellular location is the dendritic spine membrane. It carries out the reaction a 1,2-diacyl-sn-glycerol + H2O = a 2-acylglycerol + a fatty acid + H(+). The enzyme catalyses 1-octadecanoyl-2-(5Z,8Z,11Z,14Z-eicosatetraenoyl)-sn-glycerol + H2O = 2-(5Z,8Z,11Z,14Z-eicosatetraenoyl)-glycerol + octadecanoate + H(+). The catalysed reaction is 1,2-di-(9Z-octadecenoyl)-sn-glycerol + H2O = 2-(9Z-octadecenoyl)-glycerol + (9Z)-octadecenoate + H(+). It catalyses the reaction 1-(9Z-octadecenoyl)-2-(5Z,8Z,11Z,14Z-eicosatetraenoyl)-sn-glycerol + H2O = 2-(5Z,8Z,11Z,14Z-eicosatetraenoyl)-glycerol + (9Z)-octadecenoate + H(+). It carries out the reaction 1-(9Z-octadecenoyl)-2-octadecanoyl-sn-glycerol + H2O = 2-octadecanoylglycerol + (9Z)-octadecenoate + H(+). The enzyme catalyses 1-(9Z-octadecenoyl)-2-(9Z,12Z-octadecadienoyl)-sn-glycerol + H2O = 2-(9Z,12Z-octadecadienoyl)-glycerol + (9Z)-octadecenoate + H(+). The catalysed reaction is 1-(9Z-octadecenoyl)-2-O-(5Z,8Z,11Z,14Z-eicosatetraenyl)-sn-glycerol + H2O = 2-O-(5Z,8Z,11Z,14Z)-eicosatetraenylglycerol + (9Z)-octadecenoate + H(+). With respect to regulation, inhibited by 1,2,3-triazole urea covalent inhibitors KT172, DH376 and DO34. Inhibited by p-hydroxy-mercuri-benzoate and HgCl(2), but not to PMSF. Also inhibited by RHC80267. Diacylglycerol lipase activity is inhibited by the phosphorylation of Ser-782 and Ser-808 by CAMK2A. Functionally, serine hydrolase that hydrolyzes arachidonic acid-esterified diacylglycerols (DAGs) to produce the principal endocannabinoid, 2-arachidonoylglycerol (2-AG). Preferentially hydrolyzes sn-1 fatty acids from diacylglycerols (DAG) that contain arachidonic acid (AA) esterified at the sn-2 position to biosynthesize 2-AG. Has negligible activity against other lipids including monoacylglycerols and phospholipids. Plays a key role in regulating 2-AG signaling in the central nervous system (CNS). Regulates 2-AG involved in retrograde suppression at central synapses. Supports axonal growth during development and adult neurogenesis. Plays a role for eCB signaling in the physiological regulation of anxiety and depressive behaviors. Also regulates neuroinflammatory responses in the brain, in particular, LPS-induced microglial activation. The protein is Diacylglycerol lipase-alpha (DAGLA) of Homo sapiens (Human).